A 337-amino-acid chain; its full sequence is Heme A synthase (337 aa).

The next 5 helical transmembrane spans lie at 6-26 (ITKW…IGGI), 87-107 (FIHR…LIYF), 119-139 (LPYI…WYMV), 154-174 (LAFH…QLIK), and 192-212 (LIFS…GALV). Residue H256 participates in heme binding. Transmembrane regions (helical) follow at residues 258–278 (LGSY…LTIE), 285–305 (IAYF…ITLL), and 308–328 (VPII…SIII). H316 contacts heme.

It belongs to the COX15/CtaA family. Type 2 subfamily. Interacts with CtaB. Heme b is required as a cofactor.

Its subcellular location is the cell membrane. The catalysed reaction is Fe(II)-heme o + 2 A + H2O = Fe(II)-heme a + 2 AH2. It functions in the pathway porphyrin-containing compound metabolism; heme A biosynthesis; heme A from heme O: step 1/1. Functionally, catalyzes the conversion of heme O to heme A by two successive hydroxylations of the methyl group at C8. The first hydroxylation forms heme I, the second hydroxylation results in an unstable dihydroxymethyl group, which spontaneously dehydrates, resulting in the formyl group of heme A. The protein is Heme A synthase of Rickettsia akari (strain Hartford).